Consider the following 141-residue polypeptide: uncharacterized protein (141 aa).

It belongs to the PhzA/PhzB family.

This is an uncharacterized protein from Pseudomonas aeruginosa (strain ATCC 15692 / DSM 22644 / CIP 104116 / JCM 14847 / LMG 12228 / 1C / PRS 101 / PAO1).